The sequence spans 540 residues: Beta-2-syntrophin (540 aa).

Residues 73–114 (LPNGGGAGDSLPGSPSRGLGPPSPPAPPRGPAGEAGASPPVR) form a disordered region. A compositionally biased stretch (low complexity) spans 81-92 (DSLPGSPSRGLG). Pro residues predominate over residues 93-102 (PPSPPAPPRG). Phosphoserine is present on residues S95, S110, S129, S211, S222, S233, S393, and S395. The span at 103–112 (PAGEAGASPP) shows a compositional bias: low complexity. Positions 115-198 (RVRVVKQEAG…EVLLEVKFIR (84 aa)) constitute a PDZ domain. 2 consecutive PH domains span residues 163 to 300 (ILSV…TNIM) and 325 to 437 (EVKH…QGCH). A disordered region spans residues 220–240 (PQSPSFSGSEDSGSPKHQNST). The span at 222 to 231 (SPSFSGSEDS) shows a compositional bias: low complexity. The SU domain maps to 484 to 540 (PFERLKMSADDGIRNLYLDFGGPEGELTMDLHSCPKPIVFVLHTFLSAKVTRMGLLV). Positions 518 to 540 (PKPIVFVLHTFLSAKVTRMGLLV) are calmodulin-binding.

Belongs to the syntrophin family. As to quaternary structure, monomer and homodimer. Interacts with the other members of the syntrophin family: SNTA1 and SNTB1; and with the sodium channel proteins SCN4A and SCN5A. Interacts with SAST, MAST205, microtubules and microtubule-associated proteins. Interacts with the dystrophin protein DMD and related proteins DTNA and UTRN, and with the neuroregulin receptor ERBB4. Interacts with PTPRN when phosphorylated, protecting PTPRN from protein cleavage by CAPN1. Dephosphorylation upon insulin stimulation disrupts the interaction with PTPRN and results in the cleavage of PTPRN. Interacts with DTNB. Phosphorylated. Partially dephosphorylated upon insulin stimulation. As to expression, ubiquitous. Isoform 1 is the predominant isoform. Weak level of isoform 2 is present in all tested tissues, except in liver and heart where it is highly expressed.

It is found in the membrane. Its subcellular location is the cytoplasmic vesicle. The protein localises to the secretory vesicle membrane. It localises to the cell junction. The protein resides in the cytoplasm. It is found in the cytoskeleton. Its function is as follows. Adapter protein that binds to and probably organizes the subcellular localization of a variety of membrane proteins. May link various receptors to the actin cytoskeleton and the dystrophin glycoprotein complex. May play a role in the regulation of secretory granules via its interaction with PTPRN. This Homo sapiens (Human) protein is Beta-2-syntrophin (SNTB2).